A 403-amino-acid polypeptide reads, in one-letter code: MSEKGRLFTSESVTEGHPDKICDAISDSILDALLAEDPCSRVAVETLVTTGQVHVVGEVTTLAKTAFADISNTVRERILDIGYDSSDKGFDGASCGVNIGIGAQSSDIAQGVNTAHEVRVEGAADPLDAQGAGDQGLMFGYAINDTPELMPLPIALAHRLARRLTEVRKNGVLPYLRSDGKTQVTIAYEDNVPVRLDTVVISTQHAAGVDLDATLAPDIREKVLNTVIDDLSHDTLDVSSVRVLVNPTGKFVLGGPMGDAGLTGRKIIVDTYGGWARHGGGAFSGKDPSKVDRSAAYAMRWVAKNIVAAGLAERIEVQVAYAIGKAAPVGLFVETFGTEAVDPAKIEKAIGEVFDLRPGAIIRDLHLLRPIYAQTAAYGHFGRTDVELPWEQLNKVDDLKRAI.

Position 17 (His17) interacts with ATP. A Mg(2+)-binding site is contributed by Asp19. Glu45 provides a ligand contact to K(+). L-methionine contacts are provided by Glu58 and Gln104. Positions 104 to 114 (QSSDIAQGVNT) are flexible loop. Residues 179-181 (DGK), 250-251 (KF), Asp259, 265-266 (RK), Ala282, and Lys286 each bind ATP. Residue Asp259 participates in L-methionine binding. L-methionine is bound at residue Lys290.

The protein belongs to the AdoMet synthase family. Homotetramer; dimer of dimers. Mg(2+) is required as a cofactor. Requires K(+) as cofactor.

Its subcellular location is the cytoplasm. It carries out the reaction L-methionine + ATP + H2O = S-adenosyl-L-methionine + phosphate + diphosphate. The protein operates within amino-acid biosynthesis; S-adenosyl-L-methionine biosynthesis; S-adenosyl-L-methionine from L-methionine: step 1/1. In terms of biological role, catalyzes the formation of S-adenosylmethionine (AdoMet) from methionine and ATP. The overall synthetic reaction is composed of two sequential steps, AdoMet formation and the subsequent tripolyphosphate hydrolysis which occurs prior to release of AdoMet from the enzyme. This chain is S-adenosylmethionine synthase, found in Mycobacterium leprae (strain Br4923).